Consider the following 445-residue polypeptide: tRNA(Ile)-lysidine synthase (445 aa).

33–38 (SGGLDS) is a binding site for ATP.

This sequence belongs to the tRNA(Ile)-lysidine synthase family.

Its subcellular location is the cytoplasm. The enzyme catalyses cytidine(34) in tRNA(Ile2) + L-lysine + ATP = lysidine(34) in tRNA(Ile2) + AMP + diphosphate + H(+). Its function is as follows. Ligates lysine onto the cytidine present at position 34 of the AUA codon-specific tRNA(Ile) that contains the anticodon CAU, in an ATP-dependent manner. Cytidine is converted to lysidine, thus changing the amino acid specificity of the tRNA from methionine to isoleucine. This Pseudomonas syringae pv. tomato (strain ATCC BAA-871 / DC3000) protein is tRNA(Ile)-lysidine synthase.